The primary structure comprises 339 residues: Transcription initiation factor IIB (339 aa).

Residues 39-70 (EELICPVCGSKSIIKDYERAEIVCEMCGCVLQ) form a TFIIB-type zinc finger. Cys-43, Cys-46, Cys-62, and Cys-65 together coordinate Zn(2+). 2 repeat units span residues 156–239 (SELD…SREL) and 250–331 (DYVP…ELTE).

The protein belongs to the TFIIB family.

Functionally, stabilizes TBP binding to an archaeal box-A promoter. Also responsible for recruiting RNA polymerase II to the pre-initiation complex (DNA-TBP-TFIIB). This chain is Transcription initiation factor IIB, found in Methanococcus maripaludis (strain DSM 14266 / JCM 13030 / NBRC 101832 / S2 / LL).